Reading from the N-terminus, the 224-residue chain is Synaptogyrin-2 (224 aa).

At methionine 1 the chain carries N-acetylmethionine. Position 3 is a phosphoserine (serine 3). Positions 20–171 (YVSQPQVVTR…LASLAYQRYK (152 aa)) constitute an MARVEL domain. The next 4 helical transmembrane spans lie at 30–50 (LVSM…GYIN), 73–93 (AIGV…AFFS), 105–125 (VIGD…GFCF), and 147–167 (AAIT…SLAY).

The protein belongs to the synaptogyrin family. In terms of processing, may be tyrosine phosphorylated by Src. Ubiquitously expressed with lower expression in brain (at protein level).

The protein localises to the cytoplasmic vesicle membrane. Its subcellular location is the cytoplasmic vesicle. It localises to the secretory vesicle. It is found in the synaptic vesicle membrane. May play a role in regulated exocytosis. In neuronal cells, modulates the localization of synaptophysin/SYP into synaptic-like microvesicles and may therefore play a role in the formation and/or the maturation of this vesicles. May also play a role in GLUT4 storage and transport to the plasma membrane. The chain is Synaptogyrin-2 from Rattus norvegicus (Rat).